Consider the following 172-residue polypeptide: Co-chaperone protein HscB (172 aa).

One can recognise a J domain in the interval 2 to 74 (DYFTLFGLPI…LKRAEYMLSL (73 aa)).

The protein belongs to the HscB family. As to quaternary structure, interacts with HscA and stimulates its ATPase activity. Interacts with IscU.

In terms of biological role, co-chaperone involved in the maturation of iron-sulfur cluster-containing proteins. Seems to help targeting proteins to be folded toward HscA. The polypeptide is Co-chaperone protein HscB (Pectobacterium atrosepticum (strain SCRI 1043 / ATCC BAA-672) (Erwinia carotovora subsp. atroseptica)).